The chain runs to 96 residues: Small ribosomal subunit protein bS6 (96 aa).

This sequence belongs to the bacterial ribosomal protein bS6 family.

Its function is as follows. Binds together with bS18 to 16S ribosomal RNA. The chain is Small ribosomal subunit protein bS6 from Streptococcus thermophilus (strain ATCC BAA-491 / LMD-9).